Here is a 415-residue protein sequence, read N- to C-terminus: MNNELIIKGKKAKEASYTLSFASTNEKNNGLLKISESLIKRCDEILEENKKDIEKAIEKGTSNAMLDRLKLDEERVKSIANAVADVIKLDDPIGEVTSMFKRPNGLRIGVQRVPLGVVGIIYEARPNVTADAAALCLKTGNAVILRGGSEAINSNLKIVDIISDALKEAGLPEGSVQILEDTSRETATDFMRLNDYLDVLIPRGGAGLIKAVVNNATVPVIETGVGNCHIYIDDEADINMGVDIIVNAKTSRPAVCNAAEKLLVNEKIAEEFLPVAIKALKEKGVEIRGCEKTKVIVNDINLATEEDWGKEYLDYILGVKIVKDLDEAISHINKYGTKHSESIVTKNYFNSEKFLQRVDAAAVYVNASTRFTDGGEFGFGAEIGISTQKLHARGPMGLKELTTNKYIIYGNGQVR.

It belongs to the gamma-glutamyl phosphate reductase family.

It localises to the cytoplasm. It catalyses the reaction L-glutamate 5-semialdehyde + phosphate + NADP(+) = L-glutamyl 5-phosphate + NADPH + H(+). Its pathway is amino-acid biosynthesis; L-proline biosynthesis; L-glutamate 5-semialdehyde from L-glutamate: step 2/2. In terms of biological role, catalyzes the NADPH-dependent reduction of L-glutamate 5-phosphate into L-glutamate 5-semialdehyde and phosphate. The product spontaneously undergoes cyclization to form 1-pyrroline-5-carboxylate. The polypeptide is Gamma-glutamyl phosphate reductase (Clostridium perfringens (strain SM101 / Type A)).